Reading from the N-terminus, the 348-residue chain is Probable purine nucleoside permease C285.05 (348 aa).

The signal sequence occupies residues 1-21 (MLFLKLVASVLALMTIVPAQA).

It belongs to the NUP family.

It is found in the endoplasmic reticulum. Probable nucleoside permease that transports adenosine and guanosine. In Schizosaccharomyces pombe (strain 972 / ATCC 24843) (Fission yeast), this protein is Probable purine nucleoside permease C285.05.